The following is a 534-amino-acid chain: Glucomannan 4-beta-mannosyltransferase 2 (534 aa).

Residues 36 to 56 (VIVPLLQLAVYICLLMSVMLL) traverse the membrane as a helical segment. D136 is an active-site residue. D195 and D197 together coordinate substrate. The active site involves D289. 4 helical membrane passes run 368–388 (IIAHWVTFCFYCVVLPLTILV), 404–426 (IITILNSVGTPRSIHLLFYWILF), 483–503 (LNTLELGFAAFLFVCGCYDFV), and 509–529 (YFIYLFLQTMSFFISGLGWIG).

Belongs to the glycosyltransferase 2 family. Plant cellulose synthase-like A subfamily.

The protein localises to the golgi apparatus membrane. It catalyses the reaction GDP-mannose + (glucomannan)n = GDP + (glucomannan)n+1.. Functionally, possesses glucomannan synthase and mannan synthase activities in vitro. Mannan synthase consists of a 4-beta-mannosyltransferase activity on mannan using GDP-mannose. The beta-1,4-mannan product is the backbone for galactomannan synthesis by galactomannan galactosyltransferase. Galactomannan is a noncellulosic polysaccharides of plant cell wall. This Arabidopsis thaliana (Mouse-ear cress) protein is Glucomannan 4-beta-mannosyltransferase 2.